Reading from the N-terminus, the 453-residue chain is Calcium-binding tyrosine phosphorylation-regulated protein (453 aa).

In terms of domain architecture, RIIa spans 12–49 (YGLKTLLEGVSRAILKTNPTNITQFAAVYFKELIVFRE). Disordered regions lie at residues 86–165 (PIKP…PVSA), 246–278 (PVSE…QVTS), and 406–453 (IINP…PEQV). The segment covering 143-154 (DKPTTPKTDYTP) has biased composition (low complexity).

In terms of assembly, interacts with FSCB. Post-translationally, phosphorylated on tyrosine residues during in vitro capacitation. Dephosphorylation affects its ability to bind calcium. Expressed in spermatozoa.

The protein resides in the cytoplasm. It is found in the cytoskeleton. The protein localises to the cell projection. It localises to the cilium. Its subcellular location is the flagellum. Functionally, may function as a regulator of both motility- and head-associated functions such as capacitation and the acrosome reaction. May bind calcium in vitro. The protein is Calcium-binding tyrosine phosphorylation-regulated protein (Cabyr) of Mus musculus (Mouse).